Reading from the N-terminus, the 137-residue chain is Large ribosomal subunit protein uL16 (137 aa).

Belongs to the universal ribosomal protein uL16 family. In terms of assembly, part of the 50S ribosomal subunit.

In terms of biological role, binds 23S rRNA and is also seen to make contacts with the A and possibly P site tRNAs. This chain is Large ribosomal subunit protein uL16, found in Marinomonas sp. (strain MWYL1).